Consider the following 472-residue polypeptide: Chromosomal replication initiator protein DnaA (472 aa).

Residues 1 to 73 (MSNMEHDRWS…LTCWQAEMPE (73 aa)) are domain I, interacts with DnaA modulators. Positions 73 to 128 (EVCRIDLTVRSPMRAAVTKEAPAPAEHRRDEHRPAADARSHAAAPAPSNHDALGGS) are domain II. The disordered stretch occupies residues 89 to 127 (VTKEAPAPAEHRRDEHRPAADARSHAAAPAPSNHDALGG). The span at 97–112 (AEHRRDEHRPAADARS) shows a compositional bias: basic and acidic residues. A compositionally biased stretch (low complexity) spans 113–124 (HAAAPAPSNHDA). Positions 129–351 (PLDPRLTFAS…GAINRLLAHS (223 aa)) are domain III, AAA+ region. 4 residues coordinate ATP: G176, G178, K179, and T180. The interval 352–472 (KLNAQPVTLE…VESLKRQLQE (121 aa)) is domain IV, binds dsDNA.

The protein belongs to the DnaA family. Oligomerizes as a right-handed, spiral filament on DNA at oriC.

The protein resides in the cytoplasm. Functionally, plays an essential role in the initiation and regulation of chromosomal replication. ATP-DnaA binds to the origin of replication (oriC) to initiate formation of the DNA replication initiation complex once per cell cycle. Binds the DnaA box (a 9 base pair repeat at the origin) and separates the double-stranded (ds)DNA. Forms a right-handed helical filament on oriC DNA; dsDNA binds to the exterior of the filament while single-stranded (ss)DNA is stabiized in the filament's interior. The ATP-DnaA-oriC complex binds and stabilizes one strand of the AT-rich DNA unwinding element (DUE), permitting loading of DNA polymerase. After initiation quickly degrades to an ADP-DnaA complex that is not apt for DNA replication. Binds acidic phospholipids. In Rhodopseudomonas palustris (strain BisB5), this protein is Chromosomal replication initiator protein DnaA.